The sequence spans 541 residues: Centrosomal protein of 63 kDa (541 aa).

Met1 carries the N-acetylmethionine modification. 2 coiled-coil regions span residues 22 to 199 and 242 to 305; these read EAEL…ESVE and MTVL…TQHA. The residue at position 278 (Ser278) is a Phosphoserine. Residues 294 to 324 form a disordered region; it reads QEKVKATDTQHAVEAIRPREESPAEKKYTSQ. Residues 307–321 are compositionally biased toward basic and acidic residues; it reads EAIRPREESPAEKKY. Coiled-coil stretches lie at residues 346–485 and 514–541; these read LQAE…KLEL and HILE…TALK.

This sequence belongs to the CEP63 family. As to quaternary structure, interacts with CEP152 and CDK1; these interactions recruit both ligands to centrosomes. Interacts with CDK2, CDK5RAP2, WDR62, CEP90, KIAA0753/moonraker and CCDC14. CEP63, CDK5RAP2, CEP152, WDR62 are proposed to form a stepwise assembled complex at the centrosome forming a ring near parental centrioles. Interacts with CCDC57; the interaction is required for their location to proximal end of centrioles. Interacts with FXR1; promoting its stabilization. Post-translationally, polyubiquitinated via 'Lys-48'-linked ubiquitin, leading to its degradation. Deubiquitinated by USP36, promoting its stabilization.

It is found in the cytoplasm. The protein resides in the cytoskeleton. The protein localises to the microtubule organizing center. It localises to the centrosome. Its subcellular location is the centriole. It is found in the centriolar satellite. Required for normal spindle assembly. Plays a key role in mother-centriole-dependent centriole duplication; the function seems also to involve CEP152, CDK5RAP2 and WDR62 through a stepwise assembled complex at the centrosome that recruits CDK2 required for centriole duplication. Reported to be required for centrosomal recruitment of CEP152; however, this function has been questioned. Also recruits CDK1 to centrosomes. Plays a role in DNA damage response. Following DNA damage, such as double-strand breaks (DSBs), is removed from centrosomes; this leads to the inactivation of spindle assembly and delay in mitotic progression. Promotes stabilization of FXR1 protein by inhibiting FXR1 ubiquitination. The sequence is that of Centrosomal protein of 63 kDa (CEP63) from Pongo abelii (Sumatran orangutan).